Here is a 214-residue protein sequence, read N- to C-terminus: Membrane-spanning 4-domains subfamily A member 3 (214 aa).

The tract at residues 1–31 (MASHEVDNAELGSASAHGTPGSEAGPEELNT) is disordered. At 1-49 (MASHEVDNAELGSASAHGTPGSEAGPEELNTSVYQPIDGSPDYQKAKLQ) the chain is on the cytoplasmic side. Residues 50–70 (VLGAIQILNAAMILALGVFLG) form a helical membrane-spanning segment. The Extracellular segment spans residues 71–81 (SLQYPYHFQKH). A helical membrane pass occupies residues 82–102 (FFFFTFYTGYPIWGAVFFCSS). Residues 103–124 (GTLSVVAGIKPTRTWIQNSFGM) are Cytoplasmic-facing. The helical transmembrane segment at 125-145 (NIASATIALVGTAFLSLNIAV) threads the bilayer. Residues 146-175 (NIQSLRSCHSSSESPDLCNYMGSISNGMVS) are Extracellular-facing. The chain crosses the membrane as a helical span at residues 176–196 (LLLILTLLELCVTISTIAMWC). Residues 197-214 (NANCCNSREEISSPPNSV) lie on the Cytoplasmic side of the membrane.

It belongs to the MS4A family. In terms of assembly, interacts with CDKN3. Interacts with CDKN3-CDK2 complexes through its binding to CDKN3; this interaction facilitates dissociation of cyclin A from CDKN3-CDK2 complexes. Expressed specifically in hematopoietic cells and tissues.

It is found in the endomembrane system. Its subcellular location is the cytoplasm. The protein resides in the perinuclear region. In terms of biological role, hematopoietic modulator for the G1-S cell cycle transition. Modulates the level of phosphorylation of cyclin-dependent kinase 2 (CDK2) through its direct binding to cyclin-dependent kinase inhibitor 3 (CDKN3/KAP). The chain is Membrane-spanning 4-domains subfamily A member 3 (MS4A3) from Homo sapiens (Human).